A 449-amino-acid chain; its full sequence is Ribulose bisphosphate carboxylase large chain (449 aa).

Positions 1 to 2 (MS) are excised as a propeptide. An N-acetylproline modification is found at proline 3. Position 14 is an N6,N6,N6-trimethyllysine (lysine 14). Substrate contacts are provided by asparagine 123 and threonine 173. The active-site Proton acceptor is the lysine 175. A substrate-binding site is contributed by lysine 177. 3 residues coordinate Mg(2+): lysine 201, aspartate 203, and glutamate 204. Lysine 201 bears the N6-carboxylysine mark. Catalysis depends on histidine 294, which acts as the Proton acceptor. Substrate-binding residues include residue 295, histidine 327, and serine 379.

Belongs to the RuBisCO large chain family. Type I subfamily. Heterohexadecamer of 8 large chains and 8 small chains; disulfide-linked. The disulfide link is formed within the large subunit homodimers. Mg(2+) serves as cofactor. In terms of processing, the disulfide bond which can form in the large chain dimeric partners within the hexadecamer appears to be associated with oxidative stress and protein turnover.

It is found in the plastid. The protein localises to the chloroplast. The catalysed reaction is 2 (2R)-3-phosphoglycerate + 2 H(+) = D-ribulose 1,5-bisphosphate + CO2 + H2O. It catalyses the reaction D-ribulose 1,5-bisphosphate + O2 = 2-phosphoglycolate + (2R)-3-phosphoglycerate + 2 H(+). In terms of biological role, ruBisCO catalyzes two reactions: the carboxylation of D-ribulose 1,5-bisphosphate, the primary event in carbon dioxide fixation, as well as the oxidative fragmentation of the pentose substrate in the photorespiration process. Both reactions occur simultaneously and in competition at the same active site. In Salacia pallescens, this protein is Ribulose bisphosphate carboxylase large chain.